The following is a 165-amino-acid chain: Nascent polypeptide-associated complex subunit alpha (165 aa).

The NAC-A/B domain maps to 14-78 (NRNEKKAREL…AKVDNFTQRL (65 aa)). A UBA domain is found at 126–165 (LSNDDIDLVVQQTNATKGQAIKALKEHNGDIVNAIMSLSK).

This sequence belongs to the NAC-alpha family. In terms of assembly, part of the nascent polypeptide-associated complex (NAC), consisting of EGD2 and EGD1. NAC associates with ribosomes via EGD1.

Its subcellular location is the cytoplasm. It localises to the nucleus. Its function is as follows. Component of the nascent polypeptide-associated complex (NAC), a dynamic component of the ribosomal exit tunnel, protecting the emerging polypeptides from interaction with other cytoplasmic proteins to ensure appropriate nascent protein targeting. The NAC complex also promotes mitochondrial protein import by enhancing productive ribosome interactions with the outer mitochondrial membrane and blocks the inappropriate interaction of ribosomes translating non-secretory nascent polypeptides with translocation sites in the membrane of the endoplasmic reticulum. EGD2 may also be involved in transcription regulation. This chain is Nascent polypeptide-associated complex subunit alpha (EGD2), found in Candida glabrata (strain ATCC 2001 / BCRC 20586 / JCM 3761 / NBRC 0622 / NRRL Y-65 / CBS 138) (Yeast).